Here is a 230-residue protein sequence, read N- to C-terminus: Iron-dependent repressor IdeR (230 aa).

Positions 4-65 (LVDTTEMYLR…VAGDRHLELT (62 aa)) constitute an HTH dtxR-type domain.

Belongs to the DtxR/MntR family. Homodimer.

It localises to the cytoplasm. Metal-dependent DNA-binding protein that controls transcription of many genes involved in iron metabolism. This is Iron-dependent repressor IdeR (ideR) from Mycobacterium bovis (strain ATCC BAA-935 / AF2122/97).